Reading from the N-terminus, the 397-residue chain is Elongation factor Tu (397 aa).

In terms of domain architecture, tr-type G spans 10–206; sequence KPHVNIGTIG…AVDQNIPEPQ (197 aa). The tract at residues 19–26 is G1; it reads GHIDHGKT. 19–26 provides a ligand contact to GTP; sequence GHIDHGKT. Residue threonine 26 coordinates Mg(2+). The segment at 62 to 66 is G2; the sequence is GITIS. Residues 83 to 86 form a G3 region; the sequence is DCPG. GTP contacts are provided by residues 83–87 and 138–141; these read DCPGH and NKSD. Residues 138–141 form a G4 region; that stretch reads NKSD. Residues 176–178 are G5; that stretch reads SAL.

It belongs to the TRAFAC class translation factor GTPase superfamily. Classic translation factor GTPase family. EF-Tu/EF-1A subfamily. As to quaternary structure, monomer.

Its subcellular location is the cytoplasm. It carries out the reaction GTP + H2O = GDP + phosphate + H(+). In terms of biological role, GTP hydrolase that promotes the GTP-dependent binding of aminoacyl-tRNA to the A-site of ribosomes during protein biosynthesis. The sequence is that of Elongation factor Tu from Thermobifida fusca (strain YX).